Consider the following 493-residue polypeptide: Glutamate--tRNA ligase (493 aa).

Positions 10-20 match the 'HIGH' region motif; the sequence is PSPTGDPHVGT. A 'KMSKS' region motif is present at residues 251–255; it reads KLSKR. K254 is an ATP binding site.

It belongs to the class-I aminoacyl-tRNA synthetase family. Glutamate--tRNA ligase type 1 subfamily. Monomer.

The protein localises to the cytoplasm. The catalysed reaction is tRNA(Glu) + L-glutamate + ATP = L-glutamyl-tRNA(Glu) + AMP + diphosphate. Its function is as follows. Catalyzes the attachment of glutamate to tRNA(Glu) in a two-step reaction: glutamate is first activated by ATP to form Glu-AMP and then transferred to the acceptor end of tRNA(Glu). The chain is Glutamate--tRNA ligase from Pseudomonas entomophila (strain L48).